Reading from the N-terminus, the 408-residue chain is Succinylornithine transaminase (408 aa).

Lys-252 is modified (N6-(pyridoxal phosphate)lysine).

The protein belongs to the class-III pyridoxal-phosphate-dependent aminotransferase family. AstC subfamily. Pyridoxal 5'-phosphate is required as a cofactor.

It carries out the reaction N(2)-succinyl-L-ornithine + 2-oxoglutarate = N-succinyl-L-glutamate 5-semialdehyde + L-glutamate. It participates in amino-acid degradation; L-arginine degradation via AST pathway; L-glutamate and succinate from L-arginine: step 3/5. In terms of biological role, catalyzes the transamination of N(2)-succinylornithine and alpha-ketoglutarate into N(2)-succinylglutamate semialdehyde and glutamate. Can also act as an acetylornithine aminotransferase. This is Succinylornithine transaminase from Salmonella typhimurium (strain LT2 / SGSC1412 / ATCC 700720).